A 375-amino-acid chain; its full sequence is Alcohol dehydrogenase 1 (375 aa).

N-acetylalanine is present on Ala1. Zn(2+) is bound by residues Cys46, His68, Cys98, Cys101, Cys104, Cys112, and Cys175. Residues 200–205 (GLGGVG), Asp224, Lys229, 293–295 (VGV), and Arg370 each bind NAD(+).

The protein belongs to the zinc-containing alcohol dehydrogenase family. Class-I subfamily. In terms of assembly, homodimer. It depends on Zn(2+) as a cofactor.

Its subcellular location is the cytoplasm. The enzyme catalyses a primary alcohol + NAD(+) = an aldehyde + NADH + H(+). It catalyses the reaction a secondary alcohol + NAD(+) = a ketone + NADH + H(+). The protein is Alcohol dehydrogenase 1 of Columba livia (Rock dove).